The chain runs to 102 residues: Trp operon repressor homolog (102 aa).

A DNA-binding region spans residues 59–82; that stretch reads QRQISQMLGVGIATITRGSNELKL.

Belongs to the TrpR family. In terms of assembly, homodimer.

The protein localises to the cytoplasm. In terms of biological role, this protein is an aporepressor. When complexed with L-tryptophan it binds the operator region of the trp operon and prevents the initiation of transcription. The protein is Trp operon repressor homolog of Vibrio vulnificus (strain CMCP6).